We begin with the raw amino-acid sequence, 140 residues long: Methylglyoxal synthase (140 aa).

The region spanning 1 to 140 (MKIALIAHDR…HEGDRRPLAF (140 aa)) is the MGS-like domain. Substrate is bound by residues H8, K12, 34–37 (TGTT), and 54–55 (SG). The Proton donor/acceptor role is filled by D60. A substrate-binding site is contributed by H87.

The protein belongs to the methylglyoxal synthase family.

The enzyme catalyses dihydroxyacetone phosphate = methylglyoxal + phosphate. In terms of biological role, catalyzes the formation of methylglyoxal from dihydroxyacetone phosphate. This chain is Methylglyoxal synthase, found in Enterococcus faecalis (strain ATCC 700802 / V583).